Here is a 141-residue protein sequence, read N- to C-terminus: Hemoglobin subunit alpha-A (141 aa).

Positions 1–141 constitute a Globin domain; sequence VLSASDKANV…VGTVLTAKYR (141 aa). An O2-binding site is contributed by histidine 58. Histidine 87 contributes to the heme b binding site.

Belongs to the globin family. In terms of assembly, heterotetramer of two alpha chains and two beta chains. Red blood cells.

Functionally, involved in oxygen transport from the lung to the various peripheral tissues. The chain is Hemoglobin subunit alpha-A (HBAA) from Sturnus vulgaris (Starling).